Here is a 344-residue protein sequence, read N- to C-terminus: Phosphate acyltransferase (344 aa).

The protein belongs to the PlsX family. Homodimer. Probably interacts with PlsY.

It localises to the cytoplasm. It carries out the reaction a fatty acyl-[ACP] + phosphate = an acyl phosphate + holo-[ACP]. It functions in the pathway lipid metabolism; phospholipid metabolism. Catalyzes the reversible formation of acyl-phosphate (acyl-PO(4)) from acyl-[acyl-carrier-protein] (acyl-ACP). This enzyme utilizes acyl-ACP as fatty acyl donor, but not acyl-CoA. The protein is Phosphate acyltransferase of Acaryochloris marina (strain MBIC 11017).